A 297-amino-acid polypeptide reads, in one-letter code: 32 kDa beta-galactoside-binding lectin lec-3 (297 aa).

2 Galectin domains span residues 11 to 142 (YRSK…VQWG) and 151 to 290 (ESGI…IQVV). 224–230 (WGNEERE) contributes to the a beta-D-galactoside binding site.

In terms of biological role, binds galactose. The polypeptide is 32 kDa beta-galactoside-binding lectin lec-3 (lec-3) (Caenorhabditis elegans).